A 516-amino-acid polypeptide reads, in one-letter code: Prolyl 4-hydroxylase subunit alpha-1 (516 aa).

Residue Asn97 is glycosylated (N-linked (GlcNAc...) asparagine). Residues 189–222 (VYILDYLSYAVYQQGDLSKAMMLTKRLLELDPEH) form a TPR repeat. An N-linked (GlcNAc...) asparagine glycan is attached at Asn243. The Fe2OG dioxygenase domain maps to 393–501 (TAEELQVANY…KWVSNKWLHE (109 aa)). Fe cation contacts are provided by His411, Asp413, and His482. 2-oxoglutarate is bound at residue Lys492.

The protein belongs to the P4HA family. Heterotetramer of two alpha chains and two beta chains (the beta chain is the multi-functional PDI). It depends on Fe(2+) as a cofactor. Requires L-ascorbate as cofactor.

It is found in the endoplasmic reticulum lumen. It carries out the reaction L-prolyl-[collagen] + 2-oxoglutarate + O2 = trans-4-hydroxy-L-prolyl-[collagen] + succinate + CO2. Catalyzes the post-translational formation of 4-hydroxyproline in -Xaa-Pro-Gly- sequences in collagens and other proteins. This Gallus gallus (Chicken) protein is Prolyl 4-hydroxylase subunit alpha-1 (P4HA1).